We begin with the raw amino-acid sequence, 446 residues long: NADH-dependent phenylglyoxylate dehydrogenase subunit beta (446 aa).

4Fe-4S ferredoxin-type domains lie at 6–35 (STIA…TDDI), 49–80 (ADKT…KDGT), 82–111 (GVIG…LDEA), and 109–141 (DEAT…HITT).

Dimer of heteropentamers composed of an alpha (PadG), a beta (PadI), a gamma (PadE), a delta (PadF) and an epsilon (PadH) subunit. The cofactor is [4Fe-4S] cluster.

It carries out the reaction phenylglyoxylate + NAD(+) + CoA = benzoyl-CoA + CO2 + NADH. With respect to regulation, activated by magnesium ions and thiamine diphosphate. Involved in the anaerobic metabolism of phenylalanine and phenylacetate. Catalyzes the oxidative decarboxylation of phenylglyoxylate to benzoyl-CoA and CO(2). It can also react slowly with 2-oxo-3-methylbutanoate and use different electron acceptors such as benzyl viologen, methyl viologen, FAD or FMN, but NAD seems to be the physiological electron acceptor. Also catalyzes an isotope exchange between CO(2) and the carboxyl group which proves partial or complete reversibility of the oxidative decarboxylation reaction. In Aromatoleum evansii (Azoarcus evansii), this protein is NADH-dependent phenylglyoxylate dehydrogenase subunit beta (padI).